The chain runs to 81 residues: Photosystem I iron-sulfur center (81 aa).

4Fe-4S ferredoxin-type domains follow at residues 2–31 (SHSV…MIPW) and 39–68 (IASA…VRVY). Residues Cys11, Cys14, Cys17, Cys21, Cys48, Cys51, Cys54, and Cys58 each contribute to the [4Fe-4S] cluster site.

The eukaryotic PSI reaction center is composed of at least 11 subunits. It depends on [4Fe-4S] cluster as a cofactor.

Its subcellular location is the plastid. The protein resides in the chloroplast thylakoid membrane. It carries out the reaction reduced [plastocyanin] + hnu + oxidized [2Fe-2S]-[ferredoxin] = oxidized [plastocyanin] + reduced [2Fe-2S]-[ferredoxin]. In terms of biological role, apoprotein for the two 4Fe-4S centers FA and FB of photosystem I (PSI); essential for photochemical activity. FB is the terminal electron acceptor of PSI, donating electrons to ferredoxin. The C-terminus interacts with PsaA/B/D and helps assemble the protein into the PSI complex. Required for binding of PsaD and PsaE to PSI. PSI is a plastocyanin-ferredoxin oxidoreductase, converting photonic excitation into a charge separation, which transfers an electron from the donor P700 chlorophyll pair to the spectroscopically characterized acceptors A0, A1, FX, FA and FB in turn. This Phalaenopsis aphrodite subsp. formosana (Moth orchid) protein is Photosystem I iron-sulfur center.